The primary structure comprises 175 residues: Large ribosomal subunit protein uL10 (175 aa).

The protein belongs to the universal ribosomal protein uL10 family. In terms of assembly, part of the ribosomal stalk of the 50S ribosomal subunit. The N-terminus interacts with L11 and the large rRNA to form the base of the stalk. The C-terminus forms an elongated spine to which L12 dimers bind in a sequential fashion forming a multimeric L10(L12)X complex.

Functionally, forms part of the ribosomal stalk, playing a central role in the interaction of the ribosome with GTP-bound translation factors. In Halorhodospira halophila (strain DSM 244 / SL1) (Ectothiorhodospira halophila (strain DSM 244 / SL1)), this protein is Large ribosomal subunit protein uL10.